A 483-amino-acid polypeptide reads, in one-letter code: Protein LMBR1L (483 aa).

At 1 to 21 the chain is on the extracellular side; the sequence is MEVNQDVSVREQIFHDWVREC. A helical membrane pass occupies residues 22 to 42; sequence IICSLLFSTLYLLSYIVITKF. At 43–60 the chain is on the cytoplasmic side; it reads KKHADFATVDVEDAAVNR. The helical transmembrane segment at 61 to 81 threads the bilayer; the sequence is IALWMCTFTLAVSVGAVLLLP. Residues 82-112 are Extracellular-facing; the sequence is FSIISNEVLLSVPHNYYIQWLNGSLIHGLWN. Residues 113–133 traverse the membrane as a helical segment; sequence LVFLFSNLSLVFLMPFAYLFT. Residues 134 to 153 lie on the Cytoplasmic side of the membrane; that stretch reads EAEGFAGSKKGVMSRVYETT. A helical membrane pass occupies residues 154-174; sequence VVLLLLTLLVFGIVWVASAIF. The Extracellular segment spans residues 175–194; the sequence is DDDSAGRESLYDLWEYYLPY. The chain crosses the membrane as a helical span at residues 195-215; sequence LYSGISLFGVLLLLLCTPFGL. At 216-294 the chain is on the cytoplasmic side; sequence SRMFSVTGNL…RRRASPWQRN (79 aa). The helical transmembrane segment at 295–315 threads the bilayer; it reads LVYPLAMLLLLALTGITVLIV. Topologically, residues 316-342 are extracellular; sequence CVNVLELLIDEAAMPKGIQGSQLGKVS. Residues 343-363 form a helical membrane-spanning segment; it reads FSVFGSFGAAVQVILIFYLMA. Residues 364 to 386 lie on the Cytoplasmic side of the membrane; sequence SSVVGFYSSPLFIQLLPQKQNTP. Residues 387–407 traverse the membrane as a helical segment; it reads MTKIIGNCVSLLILSSALPVF. The Extracellular portion of the chain corresponds to 408–429; the sequence is SRTLGITRFDLLGDFGRFNWLG. The chain crosses the membrane as a helical span at residues 430-450; it reads NFYLILLYNMMFAGLATLCLV. Residues 451 to 483 lie on the Cytoplasmic side of the membrane; the sequence is KKFTWAVQAELIRAFGLDRLPLSVKKIRSQGKA.

This sequence belongs to the LIMR family. As to quaternary structure, dimer. Can also form higher oligomers.

It is found in the cell membrane. Its subcellular location is the endoplasmic reticulum membrane. In terms of biological role, may play a role in lymphocyte development by negatively regulating the canonical Wnt signaling pathway. May act as a LCN1 receptor. The protein is Protein LMBR1L (lmbr1l) of Xenopus laevis (African clawed frog).